A 1809-amino-acid polypeptide reads, in one-letter code: Pyochelin synthetase PchF (1809 aa).

The condensation/cyclization stretch occupies residues 69–490 (FPLTPVQAAY…GLLRRLAQSP (422 aa)). Positions 520 to 915 (FAERALLTPD…GREDDQVKIR (396 aa)) are adenylation. The Carrier domain maps to 1407–1488 (APADELESAL…GLAERLRSAP (82 aa)). S1442 is subject to O-(pantetheine 4'-phosphoryl)serine. The tract at residues 1584–1797 (LGRRYAEALH…FDCLGEALAQ (214 aa)) is thioesterase.

The protein belongs to the NRP synthetase family. It depends on pantetheine 4'-phosphate as a cofactor.

It catalyses the reaction holo-[peptidyl-carrier protein] + L-cysteine + ATP = L-cysteinyl-[peptidyl-carrier protein] + AMP + diphosphate. It participates in siderophore biosynthesis. Its function is as follows. Involved in the biosynthesis of the siderophore pyochelin. Adenylates L-cysteine and loads it onto its peptidyl carrier domain via a thioester linkage to the phosphopanthetheine moiety. Then forms a peptide bond between the salicyl-thiazolinyl intermediate bound to the second carrier domain of PchE and the cysteine bound to its own peptidyl carrier domain to form the salicyl-thiazolinyl-cysteinyl-S-PCP2 intermediate. It subsequently cyclizes the C-terminal cysteine to form the second thiazoline heterocycle in the salicyl-thiazolinyl-thiazolinyl-S-PCP2 intermediate. When this intermediate is released by the action of a thioesterase, it produces the tricyclic acid hydroxyphenyl-thiazolyl-thiazolinyl-carboxylic acid (HPTT-COOH), an advanced intermediate containing the aryl-4,2-bis-heterocyclic skeleton of the bithiazoline class of siderophores. The chain is Pyochelin synthetase PchF from Pseudomonas aeruginosa (strain UCBPP-PA14).